Consider the following 328-residue polypeptide: 2,4-dinitroanisole O-demethylase subunit alpha (328 aa).

A propeptide spanning residues 1–9 (MSVTSQTSS) is cleaved from the precursor. Zn(2+) is bound by residues His-101, His-103, Asp-105, His-168, His-225, and Cys-247.

This sequence belongs to the metallo-beta-lactamase superfamily. As to quaternary structure, part of the complex DnhAB composed of the 2,4-dinitroanisole O-demethylase alpha (DnhA) and beta (DnhB) subunits. Zn(2+) serves as cofactor.

The enzyme catalyses 2,4-dinitroanisole + H2O = 2,4-dinitrophenol + methanol + H(+). In terms of biological role, involved in the degradation of 2,4-dinitroanisole (DNAN), an insensitive munition ingredient used in explosive formulations as a replacement for 2,4,6-trinitrotoluene (TNT). Catalyzes the removal of the methyl group from 2,4-dinitroanisole (DNAN) to yield 2,4-dinitrophenol (2,4-DNP) and methanol. This chain is 2,4-dinitroanisole O-demethylase subunit alpha, found in Nocardioides sp. (strain JS1661).